The primary structure comprises 719 residues: MRTVRTLLIDNYDSFTYNLFQMLAEVNGAAPLVVRNDDTRTWQALAPGDFDNVVVSPGPGHPATDTDLGLSRRVITEWDLPLLGVCLGHQALCLLAGAAVVHAPEPFHGRTSDIRHDGQGLFANIPSPLTVVRYHSLTVRQLPADLRATAHTADGQLMAVAHRHLPRFGVQFHPESISSEHGHRMLANFRDLSLRAAGHRPPHTERIPAPAPAPAPAPAPAPPASAPVGEYRLHVREVACVPDADAAFTALFADAPARFWLDSSRVEPGLARFTFLGAPAGPLGEQITYDVADRAVRVKDGSGGETRRPGTLFDHLEHELAARALPATGLPFEFNLGYVGYLGYETKADSGGEDAHRGELPDGAFMFADRMLALDHEQGRAWLLALSSTRRPATAPAAERWLTDAARTLATTAPRPPFTLLPDDQLPALDVHYRHSLPRYRELVEECRRLITDGETYEVCLTNMLRVPGRIDPLTAYRALRTVSPAPYAAYLQFPGATVLSSSPERFLRIGADGWAESKPIKGTRPRGAGPAQDAAVKASLAAAEKDRSENLMIVDLVRNDLGQVCDIGSVHVPGLFEVETYATVHQLVSTVRGRLAADVSRPRAVRAAFPGGSMTGAPKVRTMQFIDRLEKGPRGVYSGALGYFALSGAADLSIVIRTIVATEEAATIGVGGAVVALSDPDDEVREMLLKAQTTLAALRQAHAGATASDRELLAGSLR.

Residues 5-199 (RTLLIDNYDS…RDLSLRAAGH (195 aa)) form the Glutamine amidotransferase type-1 domain. Cys-86 functions as the Nucleophile in the catalytic mechanism. Catalysis depends on residues His-173 and Glu-175. The tract at residues 199–224 (HRPPHTERIPAPAPAPAPAPAPAPPA) is disordered. Over residues 209-224 (APAPAPAPAPAPAPPA) the composition is skewed to pro residues.

In the C-terminal section; belongs to the anthranilate synthase component I family.

The catalysed reaction is chorismate + L-glutamine = 4-amino-4-deoxychorismate + L-glutamate. It participates in antibiotic biosynthesis. In terms of biological role, involved in pristinamycin I biosynthesis. Catalyzes the biosynthesis of 4-amino-4-deoxychorismate (ADC) from chorismate and glutamine. The polypeptide is Aminodeoxychorismate synthase (Streptomyces pristinaespiralis).